Consider the following 541-residue polypeptide: Eukaryotic translation initiation factor 3 subunit L (541 aa).

Residues threonine 308–histidine 516 enclose the PCI domain.

This sequence belongs to the eIF-3 subunit L family. In terms of assembly, component of the eukaryotic translation initiation factor 3 (eIF-3) complex. The eIF-3 complex interacts with pix.

The protein resides in the cytoplasm. Its function is as follows. Component of the eukaryotic translation initiation factor 3 (eIF-3) complex, which is involved in protein synthesis of a specialized repertoire of mRNAs and, together with other initiation factors, stimulates binding of mRNA and methionyl-tRNAi to the 40S ribosome. The eIF-3 complex specifically targets and initiates translation of a subset of mRNAs involved in cell proliferation. This is Eukaryotic translation initiation factor 3 subunit L from Drosophila persimilis (Fruit fly).